A 1268-amino-acid chain; its full sequence is Protein transport protein Sec24B (1268 aa).

2 stretches are compositionally biased toward low complexity: residues 1–14 and 21–48; these read MSAP…AASA and GGAA…GPAQ. 4 disordered regions span residues 1 to 71, 216 to 263, 303 to 345, and 362 to 451; these read MSAP…SGHY, APTV…LTWS, QNVQ…SVTQ, and NNQA…VVPQ. Ser-2 is modified (N-acetylserine). Ser-55 is modified (phosphoserine). The span at 225-234 shows a compositional bias: polar residues; it reads NSFSGQNTAI. Composition is skewed to low complexity over residues 245–255, 311–332, and 365–375; these read SQQHHQQQSLS, SPVV…TPPT, and ASSAPTPLSST. Phosphothreonine is present on Thr-329. The segment covering 376-389 has biased composition (acidic residues); it reads SDDEEEEEEDEEAG. Residues 426 to 450 are compositionally biased toward pro residues; sequence APDPAPEPDPASAPAPASAPAPVVP. Zn(2+)-binding residues include Cys-605, Cys-608, Cys-626, and Cys-629. The tract at residues 605–629 is zinc finger-like; it reads CRSCRTYINPFVSFIDQRRWKCNLC. One copy of the Gelsolin-like repeat lies at 1141 to 1213; that stretch reads PQPPLQKLSA…TLSSERARSF (73 aa). A Phosphoserine modification is found at Ser-1224.

The protein belongs to the SEC23/SEC24 family. SEC24 subfamily. In terms of assembly, COPII is composed of at least five proteins: the Sec23/24 complex, the Sec13/31 complex and SAR1. Interacts with STING1; promoting STING1 translocation to COPII vesicles in a STEEP1-dependent manner. Interacts with RNF139. Interacts with TMED2 and TMED10. Interacts with CNIH4.

Its subcellular location is the cytoplasmic vesicle. The protein resides in the COPII-coated vesicle membrane. It localises to the endoplasmic reticulum membrane. The protein localises to the cytoplasm. It is found in the cytosol. Functionally, component of the coat protein complex II (COPII) which promotes the formation of transport vesicles from the endoplasmic reticulum (ER). The coat has two main functions, the physical deformation of the endoplasmic reticulum membrane into vesicles and the selection of cargo molecules for their transport to the Golgi complex. Plays a central role in cargo selection within the COPII complex and together with SEC24A may have a different specificity compared to SEC24C and SEC24D. May package preferentially cargos with cytoplasmic DxE or LxxLE motifs and may also recognize conformational epitopes. This is Protein transport protein Sec24B from Homo sapiens (Human).